A 346-amino-acid polypeptide reads, in one-letter code: Cyclin-dependent kinase 20 (346 aa).

Residues Y4–F288 form the Protein kinase domain. Residues I10–V18 and K33 contribute to the ATP site. D127 (proton acceptor) is an active-site residue.

The protein belongs to the protein kinase superfamily. CMGC Ser/Thr protein kinase family. CDC2/CDKX subfamily. In terms of assembly, monomer. Interacts with TBC1D32. Interacts with MAK.

The protein localises to the nucleus. It localises to the cytoplasm. It is found in the cell projection. Its subcellular location is the cilium. It catalyses the reaction L-seryl-[protein] + ATP = O-phospho-L-seryl-[protein] + ADP + H(+). It carries out the reaction L-threonyl-[protein] + ATP = O-phospho-L-threonyl-[protein] + ADP + H(+). Required for high-level Shh responses in the developing neural tube. Together with TBC1D32, controls the structure of the primary cilium by coordinating assembly of the ciliary membrane and axoneme, allowing GLI2 to be properly activated in response to SHH signaling. Involved in cell growth. Activates CDK2, a kinase involved in the control of the cell cycle, by phosphorylating residue 'Thr-160'. In Homo sapiens (Human), this protein is Cyclin-dependent kinase 20 (CDK20).